The chain runs to 200 residues: MSEFIYLASQSPRRSQLLALLGVRHELLLPDADEDAEALEAVLPNEAPAAYVKRVTQLKLDAALQRLKRRGLPAAPVLCSDTTVALGRKIFGKPTDAADATRMLKELSNTTHRVLTAVALGTARKREQVLCESRVTFSAMSSRQIQTYAASGEPLGKAGAYAVQGRAAAFISHMSGSYSGIMGLPMFETAQLLQSFGFKV.

The active-site Proton acceptor is the aspartate 81.

Belongs to the Maf family. YhdE subfamily. A divalent metal cation serves as cofactor.

Its subcellular location is the cytoplasm. It carries out the reaction dTTP + H2O = dTMP + diphosphate + H(+). The catalysed reaction is UTP + H2O = UMP + diphosphate + H(+). Functionally, nucleoside triphosphate pyrophosphatase that hydrolyzes dTTP and UTP. May have a dual role in cell division arrest and in preventing the incorporation of modified nucleotides into cellular nucleic acids. The chain is dTTP/UTP pyrophosphatase from Albidiferax ferrireducens (strain ATCC BAA-621 / DSM 15236 / T118) (Rhodoferax ferrireducens).